A 164-amino-acid chain; its full sequence is Protein-export protein SecB (164 aa).

It belongs to the SecB family. In terms of assembly, homotetramer, a dimer of dimers. One homotetramer interacts with 1 SecA dimer.

It localises to the cytoplasm. Functionally, one of the proteins required for the normal export of preproteins out of the cell cytoplasm. It is a molecular chaperone that binds to a subset of precursor proteins, maintaining them in a translocation-competent state. It also specifically binds to its receptor SecA. The protein is Protein-export protein SecB of Stutzerimonas stutzeri (strain A1501) (Pseudomonas stutzeri).